The chain runs to 150 residues: Ribosome maturation factor RimP (150 aa).

Belongs to the RimP family.

Its subcellular location is the cytoplasm. In terms of biological role, required for maturation of 30S ribosomal subunits. This Yersinia pestis bv. Antiqua (strain Antiqua) protein is Ribosome maturation factor RimP.